Reading from the N-terminus, the 98-residue chain is Large ribosomal subunit protein bL27 (98 aa).

Positions 1-10 are excised as a propeptide; that stretch reads MELKMNLQLF. The tract at residues 11 to 30 is disordered; sequence AQKKGTGSSKNGRDSISKRL.

It belongs to the bacterial ribosomal protein bL27 family. Post-translationally, the N-terminus is cleaved by ribosomal processing cysteine protease Prp.

This Natranaerobius thermophilus (strain ATCC BAA-1301 / DSM 18059 / JW/NM-WN-LF) protein is Large ribosomal subunit protein bL27.